Consider the following 286-residue polypeptide: Bifunctional protein FolD (286 aa).

NADP(+)-binding positions include 165–167 (GRS), Ser190, and Val231.

It belongs to the tetrahydrofolate dehydrogenase/cyclohydrolase family. In terms of assembly, homodimer.

The catalysed reaction is (6R)-5,10-methylene-5,6,7,8-tetrahydrofolate + NADP(+) = (6R)-5,10-methenyltetrahydrofolate + NADPH. It catalyses the reaction (6R)-5,10-methenyltetrahydrofolate + H2O = (6R)-10-formyltetrahydrofolate + H(+). Its pathway is one-carbon metabolism; tetrahydrofolate interconversion. Functionally, catalyzes the oxidation of 5,10-methylenetetrahydrofolate to 5,10-methenyltetrahydrofolate and then the hydrolysis of 5,10-methenyltetrahydrofolate to 10-formyltetrahydrofolate. The polypeptide is Bifunctional protein FolD (Bacillus cereus (strain B4264)).